The following is a 282-amino-acid chain: Bis(5'-nucleosyl)-tetraphosphatase, symmetrical (282 aa).

It belongs to the Ap4A hydrolase family.

It carries out the reaction P(1),P(4)-bis(5'-adenosyl) tetraphosphate + H2O = 2 ADP + 2 H(+). Hydrolyzes diadenosine 5',5'''-P1,P4-tetraphosphate to yield ADP. The protein is Bis(5'-nucleosyl)-tetraphosphatase, symmetrical of Enterobacter sp. (strain 638).